The primary structure comprises 198 residues: KinB-signaling pathway activation protein (198 aa).

6 helical membrane passes run 9-29 (FFFSILAVGALITSIVGFALK), 42-62 (AGQIFSVLFWFIGVGMIFSVI), 90-110 (LQLFFILFVAFDLMYVRFLFF), 117-137 (LAGYAWLPVFLLIFGVITAYI), 146-166 (TFVSSLFLMVVITALEWFPAL), and 173-193 (WLYLMLFPLMACNAFQLLMLP).

It is found in the cell membrane. Functionally, involved in the activation of the KinB signaling pathway of sporulation. The sequence is that of KinB-signaling pathway activation protein (kbaA) from Bacillus subtilis (strain 168).